A 314-amino-acid chain; its full sequence is Ribosomal protein L11 methyltransferase (314 aa).

S-adenosyl-L-methionine-binding residues include Thr-161, Gly-182, Asp-204, and Asn-248.

It belongs to the methyltransferase superfamily. PrmA family.

The protein resides in the cytoplasm. It carries out the reaction L-lysyl-[protein] + 3 S-adenosyl-L-methionine = N(6),N(6),N(6)-trimethyl-L-lysyl-[protein] + 3 S-adenosyl-L-homocysteine + 3 H(+). Methylates ribosomal protein L11. This Listeria monocytogenes serotype 4b (strain CLIP80459) protein is Ribosomal protein L11 methyltransferase.